A 64-amino-acid chain; its full sequence is Large ribosomal subunit protein bL35 (64 aa).

It belongs to the bacterial ribosomal protein bL35 family.

The protein is Large ribosomal subunit protein bL35 of Pseudomonas savastanoi pv. phaseolicola (strain 1448A / Race 6) (Pseudomonas syringae pv. phaseolicola (strain 1448A / Race 6)).